Consider the following 297-residue polypeptide: rRNA 2'-O-methyltransferase fibrillarin (297 aa).

The tract at residues 1 to 56 (MRGGFGRGGGGRGGSRGGRGGFGRGGGRGGGRGGGRGGGRGGGRGGGRGGGRGGAG) is disordered. Asymmetric dimethylarginine is present on residues arginine 2, arginine 7, arginine 12, arginine 16, arginine 19, arginine 24, arginine 28, arginine 32, arginine 36, arginine 40, arginine 44, arginine 48, and arginine 52. Residues 149–150 (TT), 168–169 (EF), 192–193 (DA), and 212–215 (DVAQ) each bind S-adenosyl-L-methionine.

Belongs to the methyltransferase superfamily. Fibrillarin family. As to quaternary structure, component of box C/D small nucleolar ribonucleoprotein (snoRNP) particles. It is associated with the U3, U8 and U13 small nuclear RNAs. In terms of processing, by homology to other fibrillarins, some or all of the N-terminal domain arginines are modified to asymmetric dimethylarginine (DMA).

It is found in the nucleus. It localises to the nucleolus. The catalysed reaction is L-glutaminyl-[histone H2A] + S-adenosyl-L-methionine = N(5)-methyl-L-glutaminyl-[histone H2A] + S-adenosyl-L-homocysteine + H(+). Its function is as follows. S-adenosyl-L-methionine-dependent methyltransferase that has the ability to methylate both RNAs and proteins. Involved in pre-rRNA processing. Utilizes the methyl donor S-adenosyl-L-methionine to catalyze the site-specific 2'-hydroxyl methylation of ribose moieties in pre-ribosomal RNA. Site specificity is provided by a guide RNA that base pairs with the substrate. Methylation occurs at a characteristic distance from the sequence involved in base pairing with the guide RNA. Also acts as a protein methyltransferase by mediating methylation of 'Gln-105' of histone H2A (H2AQ105me), a modification that impairs binding of the FACT complex and is specifically present at 35S ribosomal DNA locus. The sequence is that of rRNA 2'-O-methyltransferase fibrillarin from Leishmania major.